Here is a 500-residue protein sequence, read N- to C-terminus: Perfringolysin O (500 aa).

Positions 1 to 28 are cleaved as a signal peptide; that stretch reads MIRFKKTKLIASIAMALCLFSQPVISFS. The next 4 membrane-spanning stretches (beta stranded) occupy residues 189–202, 209–218, 287–296, and 304–316; these read KSQISSALNVNAKV, VDFNAVANNE, SKDVQAAFKA, and KNSQQYKDIYENS. Residues 458–468 carry the Conserved undecapeptide motif; the sequence is ECTGLAWEWWR. Residues 490–491 carry the Cholesterol binding motif; the sequence is TL.

The protein belongs to the cholesterol-dependent cytolysin family. In terms of assembly, modeling based on cryo-EM shows a homooligomeric pore complex containing 38-44 subunits; when inserted in the host membrane.

It localises to the secreted. Its subcellular location is the host cell membrane. Functionally, a cholesterol-dependent toxin that causes cytolysis by forming pores in cholesterol-containing host membranes. After binding to target membranes, the protein assembles into a pre-pore complex. A major conformational change leads to insertion in the host membrane and formation of an oligomeric pore complex. Cholesterol is required for binding to host cell membranes, membrane insertion and pore formation; cholesterol binding is mediated by a Thr-Leu pair in the C-terminus. Can be reversibly inactivated by oxidation. The polypeptide is Perfringolysin O (pfo) (Clostridium perfringens (strain 13 / Type A)).